A 65-amino-acid polypeptide reads, in one-letter code: Large ribosomal subunit protein uL29 (65 aa).

Belongs to the universal ribosomal protein uL29 family.

This chain is Large ribosomal subunit protein uL29, found in Brevibacillus brevis (strain 47 / JCM 6285 / NBRC 100599).